Consider the following 54-residue polypeptide: Ovomucoid (54 aa).

One can recognise a Kazal-like domain in the interval 4–54 (VDCSEYPKPACTLEYRPLCGSDSKTYGNKCNFCNAVVESNGTLTLSHFGKC). Intrachain disulfides connect C6–C36, C14–C33, and C22–C54. N-linked (GlcNAc...) asparagine glycosylation occurs at N43.

Its subcellular location is the secreted. This Alectoris chukar (Chukar partridge) protein is Ovomucoid.